The sequence spans 244 residues: Transcription factor A, mitochondrial (244 aa).

Residues 1–42 constitute a mitochondrion transit peptide; the sequence is MALFRGMWGVLRTLGRTGVEMCAGCGGRIPSPVSLICIPKCF. Positions 49 to 117 form a DNA-binding region, HMG box 1; sequence PKKPMSSYLR…VYKEAVSKYK (69 aa). A phosphoserine; by PKA mark is found at Ser54, Ser55, and Ser60. At Lys66 the chain carries N6-succinyllysine. Phosphothreonine is present on Thr121. The HMG box 2 DNA-binding region spans 154–218; sequence PKRPRSAYNI…RYDNEMKSWE (65 aa). Ser159 carries the post-translational modification Phosphoserine; by PKA. At Ser192 the chain carries Phosphoserine. Residues 221–244 are disordered; that stretch reads MAEVGRSDLIRRSVKRPPGDISEN.

As to quaternary structure, monomer; binds DNA as a monomer. Homodimer. Component of the mitochondrial transcription initiation complex, composed at least of TFB2M, TFAM and POLRMT. In this complex TFAM recruits POLRMT to the promoter whereas TFB2M induces structural changes in POLRMT to enable promoter opening and trapping of the DNA non-template strand. Upon metabolic stress, forms a complex composed of FOXO3, SIRT3, TFAM and POLRMT. Interacts with TFB1M and TFB2M. Interacts with CLPX; this enhances DNA-binding. In terms of processing, phosphorylation by PKA within the HMG box 1 impairs DNA binding and promotes degradation by the AAA+ Lon protease. The mitochondrial isoform is widely expressed while the nuclear isoform is testis-specific.

Its subcellular location is the mitochondrion. It is found in the mitochondrion matrix. It localises to the mitochondrion nucleoid. The protein resides in the nucleus. Its function is as follows. Binds to the mitochondrial light strand promoter and functions in mitochondrial transcription regulation. Component of the mitochondrial transcription initiation complex, composed at least of TFB2M, TFAM and POLRMT that is required for basal transcription of mitochondrial DNA. In this complex, TFAM recruits POLRMT to a specific promoter whereas TFB2M induces structural changes in POLRMT to enable promoter opening and trapping of the DNA non-template strand. Required for accurate and efficient promoter recognition by the mitochondrial RNA polymerase. Promotes transcription initiation from the HSP1 and the light strand promoter by binding immediately upstream of transcriptional start sites. Is able to unwind DNA. Bends the mitochondrial light strand promoter DNA into a U-turn shape via its HMG boxes. Required for maintenance of normal levels of mitochondrial DNA. May play a role in organizing and compacting mitochondrial DNA. May also function as a transcriptional activator or may have a structural role in the compaction of nuclear DNA during spermatogenesis. In Rattus norvegicus (Rat), this protein is Transcription factor A, mitochondrial.